The chain runs to 232 residues: 7-cyano-7-deazaguanine synthase (232 aa).

Phe8–Leu18 contacts ATP. Zn(2+) contacts are provided by Cys189, Cys198, Cys201, and Cys204.

It belongs to the QueC family. The cofactor is Zn(2+).

The catalysed reaction is 7-carboxy-7-deazaguanine + NH4(+) + ATP = 7-cyano-7-deazaguanine + ADP + phosphate + H2O + H(+). It functions in the pathway purine metabolism; 7-cyano-7-deazaguanine biosynthesis. Its function is as follows. Catalyzes the ATP-dependent conversion of 7-carboxy-7-deazaguanine (CDG) to 7-cyano-7-deazaguanine (preQ(0)). The sequence is that of 7-cyano-7-deazaguanine synthase from Photorhabdus laumondii subsp. laumondii (strain DSM 15139 / CIP 105565 / TT01) (Photorhabdus luminescens subsp. laumondii).